We begin with the raw amino-acid sequence, 188 residues long: GPI-anchored hemophore ARB_01017 (188 aa).

The first 17 residues, 1–17 (MKLSVVALAALVSVAAA), serve as a signal peptide directing secretion. One can recognise a CFEM domain in the interval 18 to 107 (QGVSELPKCA…SSSSGSASST (90 aa)). Disulfide bonds link Cys26-Cys64, Cys30-Cys59, Cys39-Cys45, and Cys47-Cys80. Asp42 is a heme binding site. Residues 95 to 163 (TGGSSSSGSA…ATSTGAPTQT (69 aa)) form a disordered region. Asn165 is lipidated: GPI-anchor amidated asparagine. Positions 166 to 188 (AAASVNANGGLLAAIAALVIAVA) are cleaved as a propeptide — removed in mature form.

It belongs to the RBT5 family. Post-translationally, the GPI-anchor is attached to the protein in the endoplasmic reticulum and serves to target the protein to the cell surface. There, the glucosamine-inositol phospholipid moiety is cleaved off and the GPI-modified mannoprotein is covalently attached via its lipidless GPI glycan remnant to the 1,6-beta-glucan of the outer cell wall layer.

Its subcellular location is the secreted. The protein localises to the cell wall. It is found in the cell membrane. Functionally, GPI-anchored cell wall protein involved in stabilizing the cell wall. The protein is GPI-anchored hemophore ARB_01017 of Arthroderma benhamiae (strain ATCC MYA-4681 / CBS 112371) (Trichophyton mentagrophytes).